The following is a 476-amino-acid chain: Aspartyl/glutamyl-tRNA(Asn/Gln) amidotransferase subunit B (476 aa).

The protein belongs to the GatB/GatE family. GatB subfamily. Heterotrimer of A, B and C subunits.

It carries out the reaction L-glutamyl-tRNA(Gln) + L-glutamine + ATP + H2O = L-glutaminyl-tRNA(Gln) + L-glutamate + ADP + phosphate + H(+). The enzyme catalyses L-aspartyl-tRNA(Asn) + L-glutamine + ATP + H2O = L-asparaginyl-tRNA(Asn) + L-glutamate + ADP + phosphate + 2 H(+). In terms of biological role, allows the formation of correctly charged Asn-tRNA(Asn) or Gln-tRNA(Gln) through the transamidation of misacylated Asp-tRNA(Asn) or Glu-tRNA(Gln) in organisms which lack either or both of asparaginyl-tRNA or glutaminyl-tRNA synthetases. The reaction takes place in the presence of glutamine and ATP through an activated phospho-Asp-tRNA(Asn) or phospho-Glu-tRNA(Gln). The chain is Aspartyl/glutamyl-tRNA(Asn/Gln) amidotransferase subunit B from Thermosipho melanesiensis (strain DSM 12029 / CIP 104789 / BI429).